The chain runs to 1297 residues: Phosphoribosylformylglycinamidine synthase (1297 aa).

Residues 307-318 and alanine 678 contribute to the ATP site; that span reads GASTGSGGEIRD. Mg(2+)-binding residues include glutamate 718, asparagine 722, and aspartate 886. In terms of domain architecture, Glutamine amidotransferase type-1 spans 1044 to 1297; sequence MAILREQGVN…MFQNARKNLA (254 aa). Cysteine 1137 serves as the catalytic Nucleophile. Catalysis depends on residues histidine 1262 and glutamate 1264.

This sequence in the N-terminal section; belongs to the FGAMS family. In terms of assembly, monomer.

The protein resides in the cytoplasm. It carries out the reaction N(2)-formyl-N(1)-(5-phospho-beta-D-ribosyl)glycinamide + L-glutamine + ATP + H2O = 2-formamido-N(1)-(5-O-phospho-beta-D-ribosyl)acetamidine + L-glutamate + ADP + phosphate + H(+). The protein operates within purine metabolism; IMP biosynthesis via de novo pathway; 5-amino-1-(5-phospho-D-ribosyl)imidazole from N(2)-formyl-N(1)-(5-phospho-D-ribosyl)glycinamide: step 1/2. Its function is as follows. Phosphoribosylformylglycinamidine synthase involved in the purines biosynthetic pathway. Catalyzes the ATP-dependent conversion of formylglycinamide ribonucleotide (FGAR) and glutamine to yield formylglycinamidine ribonucleotide (FGAM) and glutamate. The protein is Phosphoribosylformylglycinamidine synthase of Vibrio vulnificus (strain YJ016).